The chain runs to 211 residues: Urease accessory protein UreG (211 aa).

Residue 11–18 (GPVGSGKT) participates in GTP binding.

The protein belongs to the SIMIBI class G3E GTPase family. UreG subfamily. In terms of assembly, homodimer. UreD, UreF and UreG form a complex that acts as a GTP-hydrolysis-dependent molecular chaperone, activating the urease apoprotein by helping to assemble the nickel containing metallocenter of UreC. The UreE protein probably delivers the nickel.

The protein resides in the cytoplasm. Its function is as follows. Facilitates the functional incorporation of the urease nickel metallocenter. This process requires GTP hydrolysis, probably effectuated by UreG. This chain is Urease accessory protein UreG, found in Photorhabdus laumondii subsp. laumondii (strain DSM 15139 / CIP 105565 / TT01) (Photorhabdus luminescens subsp. laumondii).